The primary structure comprises 741 residues: MEHTHQYSWIIPFIPLPVPILLGVGLLLFPTVTKNLRRMWTFLSIFLLSIVMIFSLYLSIQQIFLSYIHQNVWSWAINNEFSFEFGYFIDPLTSIMSILITTVGILVLIYSDNNMSHDQGYLRFFAYMGFFNTSMLGLVTSSNLIQVYFFWELVGMCSYLLIGFWFTRPIPANACQKAFVTNRVGDFGLLLGILGLYWITGSFEFQDLFEIVNNLILNNRVNLLFLTLCAFLLFVGPIAKSAQFPLHVWLPDAMEGPTPISALIHAATMVAAGIFLVARLLPLFIVIPSIMYIISLIGIITVLLGATLALAQKDIKRGLAYSTMSQLGYMMLALGMGSYRSALFHLITHAYSKALLFLGSGSIIHSMEAIVGYSPDKSQNMILMGGLTKHVPITKTAFLVGTLSLCGIPPLACFWSKDEILNDSLLFSPIFAIIAYSTAGLTAFYMFRIYLLTFEGHLNTYFLNYSGKKSSSFYSISLWGKEEEQKLNRNFGLVPLLTMNNTKRVSFFGKKTYKISNNVTNQTFITVENFGLNTRTFYYPHESDNTILFPMLVLLLFTLFVGTIGIPFNQEGIDFDILSKLFTPSINLLHKNSQNFVDWYEFLQNVTFSVSIALFGIFIAYCLYKPFYSSLLNLTLLNSFKKWNSKRIGWEKLINFVYNWSYNRGYIDAFFKTSLTENIRRLAKQTNFFDKQIIDGITNGLGITSFFVGEVTKYIGGSRISSYLFLYLSYVLIFLRILFYF.

16 helical membrane-spanning segments follow: residues Trp9 to Phe29, Trp40 to Ile60, Ile89 to Ile109, Phe125 to Ile145, Val147 to Thr167, Gly185 to Phe205, Val221 to Ser241, Thr258 to Ala278, Leu280 to Ile300, Leu327 to Ile347, Ala354 to Ser374, Thr396 to Ser416, Leu425 to Tyr445, Ile547 to Pro567, Phe602 to Cys622, and Ile720 to Tyr740.

The protein belongs to the complex I subunit 5 family. As to quaternary structure, NDH is composed of at least 16 different subunits, 5 of which are encoded in the nucleus.

The protein localises to the plastid. The protein resides in the chloroplast thylakoid membrane. The enzyme catalyses a plastoquinone + NADH + (n+1) H(+)(in) = a plastoquinol + NAD(+) + n H(+)(out). It carries out the reaction a plastoquinone + NADPH + (n+1) H(+)(in) = a plastoquinol + NADP(+) + n H(+)(out). Its function is as follows. NDH shuttles electrons from NAD(P)H:plastoquinone, via FMN and iron-sulfur (Fe-S) centers, to quinones in the photosynthetic chain and possibly in a chloroplast respiratory chain. The immediate electron acceptor for the enzyme in this species is believed to be plastoquinone. Couples the redox reaction to proton translocation, and thus conserves the redox energy in a proton gradient. In Arabis hirsuta (Hairy rock-cress), this protein is NAD(P)H-quinone oxidoreductase subunit 5, chloroplastic (ndhF).